A 520-amino-acid chain; its full sequence is Nonsense-mediated mRNA decay factor SMG9 (520 aa).

3 disordered regions span residues 1–94 (MSES…PAPL), 108–143 (KGPV…QRPT), and 341–360 (KPST…SDEG). S2 is modified (N-acetylserine). Phosphoserine occurs at positions 2, 4, 7, 32, and 53. Residues 36–53 (GRERDYIAPWERERRDAS) show a composition bias toward basic and acidic residues. Pro residues-rich tracts occupy residues 78-94 (QPPP…PAPL) and 122-133 (TAPPPPAAPAPP). The span at 342–357 (PSTPSPSHESSSSSGS) shows a compositional bias: low complexity. S451 carries the phosphoserine modification.

The protein belongs to the SMG9 family. Self-associates to form homodimers and forms heterodimers with SMG8; these assembly forms may represent SMG1C intermediate forms. Component of the SMG1C complex composed of SMG1, SMG8 and SMG9. Interacts with DHX34; the interaction is RNA-independent. In terms of processing, phosphorylated by SMG1.

In terms of biological role, involved in nonsense-mediated decay (NMD) of mRNAs containing premature stop codons. Is recruited by release factors to stalled ribosomes together with SMG1 and SMG8 (forming the SMG1C protein kinase complex) and, in the SMG1C complex, is required for the efficient association between SMG1 and SMG8. Plays a role in brain, heart, and eye development. The polypeptide is Nonsense-mediated mRNA decay factor SMG9 (Homo sapiens (Human)).